A 309-amino-acid polypeptide reads, in one-letter code: Homoserine O-succinyltransferase (309 aa).

C142 acts as the Acyl-thioester intermediate in catalysis. Substrate contacts are provided by K163 and S192. H235 functions as the Proton acceptor in the catalytic mechanism. E237 is a catalytic residue. R249 is a binding site for substrate.

Belongs to the MetA family. Homodimer.

It localises to the cytoplasm. The enzyme catalyses L-homoserine + succinyl-CoA = O-succinyl-L-homoserine + CoA. It functions in the pathway amino-acid biosynthesis; L-methionine biosynthesis via de novo pathway; O-succinyl-L-homoserine from L-homoserine: step 1/1. Transfers a succinyl group from succinyl-CoA to L-homoserine, forming succinyl-L-homoserine. This is Homoserine O-succinyltransferase from Escherichia coli O127:H6 (strain E2348/69 / EPEC).